The chain runs to 213 residues: Cell division protein SepF (213 aa).

Residues 27-103 (VDAPAPRRAP…GSLRGSAPTR (77 aa)) are disordered. Basic and acidic residues-rich tracts occupy residues 35-51 (APVEDRRYPRRGERFAD) and 72-90 (DEDRFVSRHAPSREFDRPA).

The protein belongs to the SepF family. In terms of assembly, homodimer. Interacts with FtsZ.

It localises to the cytoplasm. Functionally, cell division protein that is part of the divisome complex and is recruited early to the Z-ring. Probably stimulates Z-ring formation, perhaps through the cross-linking of FtsZ protofilaments. Its function overlaps with FtsA. The sequence is that of Cell division protein SepF from Mycobacteroides abscessus (strain ATCC 19977 / DSM 44196 / CCUG 20993 / CIP 104536 / JCM 13569 / NCTC 13031 / TMC 1543 / L948) (Mycobacterium abscessus).